The primary structure comprises 100 residues: Urease subunit gamma (100 aa).

This sequence belongs to the urease gamma subunit family. Heterotrimer of UreA (gamma), UreB (beta) and UreC (alpha) subunits. Three heterotrimers associate to form the active enzyme.

Its subcellular location is the cytoplasm. It catalyses the reaction urea + 2 H2O + H(+) = hydrogencarbonate + 2 NH4(+). Its pathway is nitrogen metabolism; urea degradation; CO(2) and NH(3) from urea (urease route): step 1/1. The chain is Urease subunit gamma from Cupriavidus pinatubonensis (strain JMP 134 / LMG 1197) (Cupriavidus necator (strain JMP 134)).